The sequence spans 117 residues: Ig heavy chain V region J558 (117 aa).

In terms of domain architecture, Ig-like spans 1–116 (EVQLQQSGPE…WGAGTTVTVS (116 aa)). A disulfide bridge connects residues Cys22 and Cys96.

The chain is Ig heavy chain V region J558 from Mus musculus (Mouse).